Consider the following 132-residue polypeptide: Regulator of ribonuclease activity B (132 aa).

It belongs to the RraB family. In terms of assembly, interacts with the C-terminal region of Rne.

It is found in the cytoplasm. Functionally, globally modulates RNA abundance by binding to RNase E (Rne) and regulating its endonucleolytic activity. Can modulate Rne action in a substrate-dependent manner by altering the composition of the degradosome. This chain is Regulator of ribonuclease activity B, found in Alteromonas mediterranea (strain DSM 17117 / CIP 110805 / LMG 28347 / Deep ecotype).